A 322-amino-acid polypeptide reads, in one-letter code: Sideroflexin-1 (322 aa).

N-acetylserine is present on Ser-2. Topologically, residues 2–102 (SGELPPNINI…MSAQVPMNMT (101 aa)) are mitochondrial matrix. Residues 103–120 (ITGCMMTFYRTTPAVLFW) traverse the membrane as a helical segment. At 121–146 (QWINQSFNAVVNYTNRSGDAPLTVNE) the chain is on the mitochondrial intermembrane side. The helical transmembrane segment at 147 to 167 (LGTAYVSATTGAVATALGLNA) threads the bilayer. Residues 168 to 174 (LTKHVSP) are Mitochondrial matrix-facing. The chain crosses the membrane as a helical span at residues 175 to 195 (LIGRFVPFAAVAAANCINIPL). At 196–228 (MRQRELRAGIPVTDENGNRLGESANAAKQAITQ) the chain is on the mitochondrial intermembrane side. Residues 229 to 249 (VVISRILMAAPGMAIPPFIMN) form a helical membrane-spanning segment. Over 250 to 266 (TLEKKAFLKRFPWMSAP) the chain is Mitochondrial matrix. The chain crosses the membrane as a helical span at residues 267 to 287 (IQVGLVGFCLVFATPLCCALF). At 288 to 322 (PQKSSMSVTSLEAELQAKIRETSPELRRVYFNKGL) the chain is on the mitochondrial intermembrane side.

The protein belongs to the sideroflexin family.

Its subcellular location is the mitochondrion inner membrane. The enzyme catalyses L-serine(in) = L-serine(out). It catalyses the reaction L-alanine(in) = L-alanine(out). It carries out the reaction L-cysteine(in) = L-cysteine(out). Functionally, amino acid transporter importing serine, an essential substrate of the mitochondrial branch of the one-carbon pathway, into mitochondria. Mitochondrial serine is then converted to glycine and formate, which exits to the cytosol where it is used to generate the charged folates that serve as one-carbon donors. May also transport other amino acids including alanine and cysteine. This Sus scrofa (Pig) protein is Sideroflexin-1 (SFXN1).